Reading from the N-terminus, the 188-residue chain is Cytochrome b-245 chaperone 1 homolog (188 aa).

Residues 20 to 42 (SIRSWSLLVGILSVGLAAAYYST) traverse the membrane as a helical segment.

It belongs to the CYBC1 family.

It localises to the endoplasmic reticulum membrane. Its function is as follows. Functions as a chaperone necessary for a stable expression of the CYBA and CYBB subunits of the cytochrome b-245 heterodimer. The sequence is that of Cytochrome b-245 chaperone 1 homolog (cybc1) from Xenopus laevis (African clawed frog).